A 236-amino-acid chain; its full sequence is 2-C-methyl-D-erythritol 4-phosphate cytidylyltransferase (236 aa).

The protein belongs to the IspD/TarI cytidylyltransferase family. IspD subfamily.

The enzyme catalyses 2-C-methyl-D-erythritol 4-phosphate + CTP + H(+) = 4-CDP-2-C-methyl-D-erythritol + diphosphate. Its pathway is isoprenoid biosynthesis; isopentenyl diphosphate biosynthesis via DXP pathway; isopentenyl diphosphate from 1-deoxy-D-xylulose 5-phosphate: step 2/6. Catalyzes the formation of 4-diphosphocytidyl-2-C-methyl-D-erythritol from CTP and 2-C-methyl-D-erythritol 4-phosphate (MEP). The chain is 2-C-methyl-D-erythritol 4-phosphate cytidylyltransferase from Pseudomonas syringae pv. syringae (strain B728a).